A 254-amino-acid chain; its full sequence is 3-deoxy-manno-octulosonate cytidylyltransferase (254 aa).

This sequence belongs to the KdsB family.

It is found in the cytoplasm. It catalyses the reaction 3-deoxy-alpha-D-manno-oct-2-ulosonate + CTP = CMP-3-deoxy-beta-D-manno-octulosonate + diphosphate. It participates in nucleotide-sugar biosynthesis; CMP-3-deoxy-D-manno-octulosonate biosynthesis; CMP-3-deoxy-D-manno-octulosonate from 3-deoxy-D-manno-octulosonate and CTP: step 1/1. The protein operates within bacterial outer membrane biogenesis; lipopolysaccharide biosynthesis. Functionally, activates KDO (a required 8-carbon sugar) for incorporation into bacterial lipopolysaccharide in Gram-negative bacteria. The polypeptide is 3-deoxy-manno-octulosonate cytidylyltransferase (Chlamydia pneumoniae (Chlamydophila pneumoniae)).